We begin with the raw amino-acid sequence, 191 residues long: MEKYIVFVLSYILGSIPFSLVITKIKGINLREVGSGNIGATNVARTGSKCIAALALLLDSLKGFIAVYIAKQFFDDGSFHMYASAILVVLGHMFPVWLKFSGGKGVATTLGILIALNISLVLAFVFVWLAVFFAFRYSSLASLTSTIAAVLSSFFFQRDLFFTLLTVAILIFFKHYRNIVNLLQGRERKFS.

5 helical membrane-spanning segments follow: residues 5-25 (IVFVLSYILGSIPFSLVITKI), 50-70 (CIAALALLLDSLKGFIAVYIA), 78-98 (SFHMYASAILVVLGHMFPVWL), 112-132 (ILIALNISLVLAFVFVWLAVF), and 153-173 (SFFFQRDLFFTLLTVAILIFF).

It belongs to the PlsY family. As to quaternary structure, probably interacts with PlsX.

The protein localises to the cell membrane. It carries out the reaction an acyl phosphate + sn-glycerol 3-phosphate = a 1-acyl-sn-glycero-3-phosphate + phosphate. It participates in lipid metabolism; phospholipid metabolism. Its function is as follows. Catalyzes the transfer of an acyl group from acyl-phosphate (acyl-PO(4)) to glycerol-3-phosphate (G3P) to form lysophosphatidic acid (LPA). This enzyme utilizes acyl-phosphate as fatty acyl donor, but not acyl-CoA or acyl-ACP. The protein is Glycerol-3-phosphate acyltransferase of Wolbachia sp. subsp. Brugia malayi (strain TRS).